Here is a 573-residue protein sequence, read N- to C-terminus: Proline--tRNA ligase (573 aa).

The protein belongs to the class-II aminoacyl-tRNA synthetase family. ProS type 1 subfamily. Homodimer.

It is found in the cytoplasm. It carries out the reaction tRNA(Pro) + L-proline + ATP = L-prolyl-tRNA(Pro) + AMP + diphosphate. Its function is as follows. Catalyzes the attachment of proline to tRNA(Pro) in a two-step reaction: proline is first activated by ATP to form Pro-AMP and then transferred to the acceptor end of tRNA(Pro). As ProRS can inadvertently accommodate and process non-cognate amino acids such as alanine and cysteine, to avoid such errors it has two additional distinct editing activities against alanine. One activity is designated as 'pretransfer' editing and involves the tRNA(Pro)-independent hydrolysis of activated Ala-AMP. The other activity is designated 'posttransfer' editing and involves deacylation of mischarged Ala-tRNA(Pro). The misacylated Cys-tRNA(Pro) is not edited by ProRS. This chain is Proline--tRNA ligase, found in Citrifermentans bemidjiense (strain ATCC BAA-1014 / DSM 16622 / JCM 12645 / Bem) (Geobacter bemidjiensis).